The primary structure comprises 720 residues: Casein kinase II subunit alpha'-interacting protein (720 aa).

Positions 227-249 are enriched in polar residues; it reads LSSPSFTNRLQRNSFPPTSSSLE. Disordered stretches follow at residues 227–250, 264–303, 333–366, 602–640, and 678–698; these read LSSP…SLEF, KPLK…SRRL, QNTA…SPKP, TQVQ…VDPT, and LRQS…KCLK. Positions 608–626 are enriched in low complexity; the sequence is SSSSSSSCSSVSSSSSASS. Residues 630–640 are compositionally biased toward pro residues; sequence PSPPTPWVDPT. Residues 687-698 show a composition bias toward basic residues; that stretch reads KPVRSHNSKCLK.

In terms of assembly, interacts (via C-terminus) with CSNK2A2. Phosphorylated by CK2 (casein kinase II), specifically by complexes containing catalytic subunit CSNK2A2. Expressed exclusively in testis (at protein level). Within testis, expressed mainly in the intermediate compartment of the seminiferous tubules with weaker expression in the basal and adluminal compartments.

It localises to the nucleus. May play a role in chromatin regulation of male germ cells. In Mus musculus (Mouse), this protein is Casein kinase II subunit alpha'-interacting protein.